A 776-amino-acid polypeptide reads, in one-letter code: 5-methyltetrahydropteroyltriglutamate--homocysteine methyltransferase (776 aa).

Residues 16–19 and lysine 112 each bind 5-methyltetrahydropteroyltri-L-glutamate; that span reads RELK. L-homocysteine-binding positions include 432-434 and glutamate 485; that span reads IGS. L-methionine is bound by residues 432 to 434 and glutamate 485; that span reads IGS. Residues 516-517 and tryptophan 562 each bind 5-methyltetrahydropteroyltri-L-glutamate; that span reads RC. Aspartate 600 lines the L-homocysteine pocket. Aspartate 600 provides a ligand contact to L-methionine. 5-methyltetrahydropteroyltri-L-glutamate is bound at residue glutamate 606. Positions 642, 644, and 666 each coordinate Zn(2+). Residue histidine 695 is the Proton donor of the active site. Cysteine 727 is a Zn(2+) binding site. A disordered region spans residues 755 to 776; that stretch reads HAGAVHAGTPATRAEHAESALA. Residues 767–776 are compositionally biased toward basic and acidic residues; sequence RAEHAESALA.

Belongs to the vitamin-B12 independent methionine synthase family. Zn(2+) serves as cofactor.

It carries out the reaction 5-methyltetrahydropteroyltri-L-glutamate + L-homocysteine = tetrahydropteroyltri-L-glutamate + L-methionine. It participates in amino-acid biosynthesis; L-methionine biosynthesis via de novo pathway; L-methionine from L-homocysteine (MetE route): step 1/1. Catalyzes the transfer of a methyl group from 5-methyltetrahydrofolate to homocysteine resulting in methionine formation. In Ralstonia nicotianae (strain ATCC BAA-1114 / GMI1000) (Ralstonia solanacearum), this protein is 5-methyltetrahydropteroyltriglutamate--homocysteine methyltransferase.